A 69-amino-acid chain; its full sequence is Small ribosomal subunit protein uS14 (69 aa).

Zn(2+) contacts are provided by cysteine 33, cysteine 36, cysteine 51, and cysteine 54.

It belongs to the universal ribosomal protein uS14 family. Zinc-binding uS14 subfamily. Part of the 30S ribosomal subunit. Zn(2+) serves as cofactor.

Functionally, binds 16S rRNA, required for the assembly of 30S particles. The polypeptide is Small ribosomal subunit protein uS14 (Nanoarchaeum equitans (strain Kin4-M)).